The chain runs to 208 residues: FMN-dependent NADH:quinone oxidoreductase 2 (208 aa).

This sequence belongs to the azoreductase type 1 family. In terms of assembly, homodimer. It depends on FMN as a cofactor.

The catalysed reaction is 2 a quinone + NADH + H(+) = 2 a 1,4-benzosemiquinone + NAD(+). It carries out the reaction N,N-dimethyl-1,4-phenylenediamine + anthranilate + 2 NAD(+) = 2-(4-dimethylaminophenyl)diazenylbenzoate + 2 NADH + 2 H(+). Functionally, quinone reductase that provides resistance to thiol-specific stress caused by electrophilic quinones. Also exhibits azoreductase activity. Catalyzes the reductive cleavage of the azo bond in aromatic azo compounds to the corresponding amines. This is FMN-dependent NADH:quinone oxidoreductase 2 from Bacillus cereus (strain ATCC 10987 / NRS 248).